Reading from the N-terminus, the 338-residue chain is Glycerol-3-phosphate dehydrogenase [NAD(P)+] (338 aa).

The NADPH site is built by tryptophan 14, tyrosine 50, and lysine 110. Residues lysine 110, glycine 141, and serine 143 each contribute to the sn-glycerol 3-phosphate site. Alanine 145 is an NADPH binding site. 5 residues coordinate sn-glycerol 3-phosphate: lysine 196, aspartate 249, serine 259, arginine 260, and asparagine 261. The active-site Proton acceptor is the lysine 196. NADPH is bound at residue arginine 260. Glutamate 285 lines the NADPH pocket.

The protein belongs to the NAD-dependent glycerol-3-phosphate dehydrogenase family.

Its subcellular location is the cytoplasm. The enzyme catalyses sn-glycerol 3-phosphate + NAD(+) = dihydroxyacetone phosphate + NADH + H(+). It catalyses the reaction sn-glycerol 3-phosphate + NADP(+) = dihydroxyacetone phosphate + NADPH + H(+). It participates in membrane lipid metabolism; glycerophospholipid metabolism. Catalyzes the reduction of the glycolytic intermediate dihydroxyacetone phosphate (DHAP) to sn-glycerol 3-phosphate (G3P), the key precursor for phospholipid synthesis. The polypeptide is Glycerol-3-phosphate dehydrogenase [NAD(P)+] (Malacoplasma penetrans (strain HF-2) (Mycoplasma penetrans)).